The following is a 241-amino-acid chain: 1-(5-phosphoribosyl)-5-[(5-phosphoribosylamino)methylideneamino] imidazole-4-carboxamide isomerase (241 aa).

Asp8 (proton acceptor) is an active-site residue. The active-site Proton donor is Asp130.

The protein belongs to the HisA/HisF family.

The protein resides in the cytoplasm. It catalyses the reaction 1-(5-phospho-beta-D-ribosyl)-5-[(5-phospho-beta-D-ribosylamino)methylideneamino]imidazole-4-carboxamide = 5-[(5-phospho-1-deoxy-D-ribulos-1-ylimino)methylamino]-1-(5-phospho-beta-D-ribosyl)imidazole-4-carboxamide. Its pathway is amino-acid biosynthesis; L-histidine biosynthesis; L-histidine from 5-phospho-alpha-D-ribose 1-diphosphate: step 4/9. This chain is 1-(5-phosphoribosyl)-5-[(5-phosphoribosylamino)methylideneamino] imidazole-4-carboxamide isomerase, found in Leptospira borgpetersenii serovar Hardjo-bovis (strain L550).